A 361-amino-acid polypeptide reads, in one-letter code: 24-methylenesterol C-methyltransferase 2 (361 aa).

It belongs to the class I-like SAM-binding methyltransferase superfamily. Erg6/SMT family.

It carries out the reaction 24-methylidenelophenol + S-adenosyl-L-methionine = (Z)-24-ethylidenelophenol + S-adenosyl-L-homocysteine + H(+). Its pathway is steroid biosynthesis; sterol biosynthesis. Its function is as follows. Catalyzes the methyl transfer from S-adenosyl-methionine to the methylene group of 24-methylene lophenol to form 24-ethylidene lophenol. This Arabidopsis thaliana (Mouse-ear cress) protein is 24-methylenesterol C-methyltransferase 2 (SMT2).